Reading from the N-terminus, the 385-residue chain is Putative F-box protein At1g49610 (385 aa).

One can recognise an F-box domain in the interval V25–C73.

The sequence is that of Putative F-box protein At1g49610 from Arabidopsis thaliana (Mouse-ear cress).